Here is a 199-residue protein sequence, read N- to C-terminus: Holliday junction branch migration complex subunit RuvA (199 aa).

A domain I region spans residues 1–63; the sequence is MIGKLNGKID…EEHIHLYGFL (63 aa). The segment at 64-141 is domain II; sequence TLEEKNFFNL…TKIFSSSAII (78 aa). Residues 141-145 are flexible linker; it reads IKDSN. Residues 146 to 199 are domain III; it reads ISSIAINEVMKALVNLGFTRFEAQNTVQGIITQNPKISIDELIKTALKNRNSSF.

The protein belongs to the RuvA family. In terms of assembly, homotetramer. Forms an RuvA(8)-RuvB(12)-Holliday junction (HJ) complex. HJ DNA is sandwiched between 2 RuvA tetramers; dsDNA enters through RuvA and exits via RuvB. An RuvB hexamer assembles on each DNA strand where it exits the tetramer. Each RuvB hexamer is contacted by two RuvA subunits (via domain III) on 2 adjacent RuvB subunits; this complex drives branch migration. In the full resolvosome a probable DNA-RuvA(4)-RuvB(12)-RuvC(2) complex forms which resolves the HJ.

The protein localises to the cytoplasm. Its function is as follows. The RuvA-RuvB-RuvC complex processes Holliday junction (HJ) DNA during genetic recombination and DNA repair, while the RuvA-RuvB complex plays an important role in the rescue of blocked DNA replication forks via replication fork reversal (RFR). RuvA specifically binds to HJ cruciform DNA, conferring on it an open structure. The RuvB hexamer acts as an ATP-dependent pump, pulling dsDNA into and through the RuvAB complex. HJ branch migration allows RuvC to scan DNA until it finds its consensus sequence, where it cleaves and resolves the cruciform DNA. The sequence is that of Holliday junction branch migration complex subunit RuvA from Rickettsia prowazekii (strain Madrid E).